The primary structure comprises 311 residues: 4-diphosphocytidyl-2-C-methyl-D-erythritol kinase (311 aa).

Residue Lys-16 is part of the active site. Position 100-110 (100-110 (PIGAGLAGGSS)) interacts with ATP. Asp-142 is an active-site residue.

Belongs to the GHMP kinase family. IspE subfamily.

The catalysed reaction is 4-CDP-2-C-methyl-D-erythritol + ATP = 4-CDP-2-C-methyl-D-erythritol 2-phosphate + ADP + H(+). It functions in the pathway isoprenoid biosynthesis; isopentenyl diphosphate biosynthesis via DXP pathway; isopentenyl diphosphate from 1-deoxy-D-xylulose 5-phosphate: step 3/6. Functionally, catalyzes the phosphorylation of the position 2 hydroxy group of 4-diphosphocytidyl-2C-methyl-D-erythritol. The protein is 4-diphosphocytidyl-2-C-methyl-D-erythritol kinase of Prochlorococcus marinus (strain MIT 9301).